We begin with the raw amino-acid sequence, 179 residues long: Ubiquinol-cytochrome c reductase iron-sulfur subunit (179 aa).

The helical transmembrane segment at 14-35 threads the bilayer; it reads FLYVATAAVGAAGVAAVAWPFI. One can recognise a Rieske domain in the interval 80-173; sequence AKEIQSEEAA…YEFVDNTKIR (94 aa). 4 residues coordinate [2Fe-2S] cluster: Cys-118, His-120, Cys-137, and His-140. Residues Cys-123 and Cys-139 are joined by a disulfide bond.

It belongs to the Rieske iron-sulfur protein family. In terms of assembly, the main subunits of complex b-c1 are: cytochrome b, cytochrome c1 and the Rieske protein. [2Fe-2S] cluster is required as a cofactor.

It is found in the cell membrane. It catalyses the reaction a quinol + 2 Fe(III)-[cytochrome c](out) = a quinone + 2 Fe(II)-[cytochrome c](out) + 2 H(+)(out). Functionally, component of the ubiquinol-cytochrome c reductase complex (complex III or cytochrome b-c1 complex), which is a respiratory chain that generates an electrochemical potential coupled to ATP synthesis. The protein is Ubiquinol-cytochrome c reductase iron-sulfur subunit (petA) of Blastochloris viridis (Rhodopseudomonas viridis).